We begin with the raw amino-acid sequence, 54 residues long: Large ribosomal subunit protein bL33B (54 aa).

The protein belongs to the bacterial ribosomal protein bL33 family.

This chain is Large ribosomal subunit protein bL33B, found in Mycolicibacterium vanbaalenii (strain DSM 7251 / JCM 13017 / BCRC 16820 / KCTC 9966 / NRRL B-24157 / PYR-1) (Mycobacterium vanbaalenii).